The chain runs to 424 residues: Putative chloroquine resistance transporter (424 aa).

Over 1 to 56 (MTGMKKGKNKKKNVKNDERYKELDSLISNDSEIGNNSRWGGAKRICKLIGNEMRNN) the chain is Cytoplasmic. The helical transmembrane segment at 57–77 (IYVYLLSILYLCVSVMNKVFS) threads the bilayer. Residues 78–88 (KRTLNKIGNYS) lie on the Vacuolar side of the membrane. Asn86 is a glycosylation site (N-linked (GlcNAc...) asparagine). Residues 89–109 (FVTSEVHNMICTIVFQLLYFI) form a helical membrane-spanning segment. The Cytoplasmic portion of the chain corresponds to 110–125 (YRKTSNPASRNESQKN). A helical transmembrane segment spans residues 126 to 146 (FGWQFFLISLLDASTVIITMI). Over 147 to 156 (GLTRTTGNIQ) the chain is Vacuolar. A helical membrane pass occupies residues 157–177 (SFIMQLIIPVNMYFCFIFLGY). The Cytoplasmic segment spans residues 178–180 (RYH). A helical membrane pass occupies residues 181-201 (LFNYLGAFIILITIAAVETVL). Residues 202-209 (SYETQSDN) are Vacuolar-facing. The helical transmembrane segment at 210 to 230 (SIIFNLIMIFALIPLSFSNMT) threads the bilayer. Over 231-248 (REVVFKKHKINIIRLNAM) the chain is Cytoplasmic. Residues 249 to 269 (VALFQFFTSLLVLPVYNISFL) form a helical membrane-spanning segment. Residues 270 to 317 (KEIYMPFSEMGTNINDGLRCLFYGQSTIVENCGVGMVKMCDQCEGAWK) lie on the Vacuolar side of the membrane. Cystine bridges form between Cys289-Cys312 and Cys301-Cys309. Residues 318–338 (TFITYSFFNICDNLLVCYIID) form a helical membrane-spanning segment. The Cytoplasmic segment spans residues 339-346 (KFSTMTYT). Residues 347 to 367 (IVSCIQGPAITIAYYFKFLAG) form a helical membrane-spanning segment. Topologically, residues 368–377 (DVVRQPRLLD) are vacuolar. A helical transmembrane segment spans residues 378–398 (FLTLFGYLLGTIIYRIGNIIL). The Cytoplasmic segment spans residues 399 to 424 (EKKKMLKALNTDGSEAELTSIETSTA).

This sequence belongs to the CRT-like transporter family.

Its subcellular location is the vacuole membrane. Functionally, nutrient transporter. Involved in maintaining the osmotic homeostasis of the digestive vacuole. The polypeptide is Putative chloroquine resistance transporter (Plasmodium chabaudi).